A 327-amino-acid polypeptide reads, in one-letter code: MFNDIPVFDYEDIQLIPNKCIITSRSQADTSVTLGKYQFKLPVIPANMQTIIDETIAEQLAKEGYFYIMHRFDEDSRKPFIKRMHEQGLIASISVGVKACEYDFVTSLKEDAPEFITIDIAHGHANSVIDMIKHIKTELPETFVIAGNVGTPEAVRELENAGADATKVGIGPGKVCITKVKTGFGTGGWQLAALRWCAKAARKPIIADGGIRTHGDIAKSIRFGASMVMIGSLFAGHIESPGKTVEVDGETFKEYYGSASEYQKGEHKNVEGKKILLPTKGHLSDTLTEMQQDLQSSISYAGGKDLDSLRHVDYVIVKNSIWNGDSI.

The Thioimidate intermediate role is filled by Cys-176. Position 205–228 (205–228 (IIADGGIRTHGDIAKSIRFGASMV)) interacts with NADP(+).

The protein belongs to the IMPDH/GMPR family. GuaC type 2 subfamily.

It catalyses the reaction IMP + NH4(+) + NADP(+) = GMP + NADPH + 2 H(+). In terms of biological role, catalyzes the irreversible NADPH-dependent deamination of GMP to IMP. It functions in the conversion of nucleobase, nucleoside and nucleotide derivatives of G to A nucleotides, and in maintaining the intracellular balance of A and G nucleotides. This is GMP reductase from Streptococcus pyogenes serotype M49 (strain NZ131).